Consider the following 320-residue polypeptide: Cytochrome f (320 aa).

Residues 1 to 36 (MKLNSLINLIQKSIYSCTLLLTILNIICIAPNSSNA) form the signal peptide. Positions 37, 57, 60, and 61 each coordinate heme. The chain crosses the membrane as a helical span at residues 286–305 (IKGMIAFFFVSVLAQIFFVL).

This sequence belongs to the cytochrome f family. The 4 large subunits of the cytochrome b6-f complex are cytochrome b6, subunit IV (17 kDa polypeptide, petD), cytochrome f and the Rieske protein, while the 4 small subunits are PetG, PetL, PetM and PetN. The complex functions as a dimer. The cofactor is heme.

It localises to the plastid. The protein localises to the chloroplast thylakoid membrane. In terms of biological role, component of the cytochrome b6-f complex, which mediates electron transfer between photosystem II (PSII) and photosystem I (PSI), cyclic electron flow around PSI, and state transitions. This chain is Cytochrome f (petA), found in Porphyra purpurea (Red seaweed).